A 689-amino-acid polypeptide reads, in one-letter code: Glycine--tRNA ligase beta subunit (689 aa).

Belongs to the class-II aminoacyl-tRNA synthetase family. In terms of assembly, tetramer of two alpha and two beta subunits.

Its subcellular location is the cytoplasm. The enzyme catalyses tRNA(Gly) + glycine + ATP = glycyl-tRNA(Gly) + AMP + diphosphate. The protein is Glycine--tRNA ligase beta subunit of Aeromonas hydrophila subsp. hydrophila (strain ATCC 7966 / DSM 30187 / BCRC 13018 / CCUG 14551 / JCM 1027 / KCTC 2358 / NCIMB 9240 / NCTC 8049).